The following is a 469-amino-acid chain: MATATLNFITFNQDHGCLAVGTSRGFRIYHTEPFSKIFSSEDGNVSIIEMLFSTSLVALILSPRHLIIQNTKRGSVICELTFPSAVLAVRLNRKRLAVVLEDEIYLYDIANMSLLFTIATSPNPSAICALSPSSENCFLAYPLPKPREDKDDKRPSHAPPLPTYIPPTSGDVLIFDAITLKAVNVIEAHRSPLSCIAINSEGTLLATASETGTIIRVFTVPKGQKLYQFRRGTYPSTIYSMSFNLSSTLLCVSSTSDTVHIFRLGGPNNGASGAAGAGSAGEVLAASPGQDITGSPRADRWSRSRSYDSGNESPGSGSEANDIAGSPSPRDRPTAANRRQSGSFSNILRRSSQIMGRSVAGVVGSYLPQTVTEMWEPARDFAFIKIPKSSAARQHNNPGATPSLPIAGEPLRSVVAMSSSSPQVMVVTSDGKFYVYNINMETGGEGYLVRQYSILENDDKHDSSSTYES.

WD repeat units follow at residues 188–228 and 233–272; these read AHRS…KLYQ and TYPS…NGAS. Residues 229 to 233 carry the L/FRRG motif motif; sequence FRRGT. Residues 285-348 form a disordered region; it reads AASPGQDITG…RQSGSFSNIL (64 aa). Residues 297-306 show a composition bias toward basic and acidic residues; sequence RADRWSRSRS. Composition is skewed to polar residues over residues 307–319 and 337–348; these read YDSG…SGSE and NRRQSGSFSNIL.

The protein belongs to the WD repeat PROPPIN family. Component of the PI(3,5)P2 regulatory complex.

The protein resides in the preautophagosomal structure membrane. It is found in the vacuole membrane. Its subcellular location is the endosome membrane. Functionally, the PI(3,5)P2 regulatory complex regulates both the synthesis and turnover of phosphatidylinositol 3,5-bisphosphate (PtdIns(3,5)P2). Necessary for proper vacuole morphology. Plays an important role in osmotically-induced vacuole fragmentation. Required for cytoplasm to vacuole transport (Cvt) vesicle formation, pexophagy and starvation-induced autophagy. Involved in correct ATG9 trafficking to the pre-autophagosomal structure. Might also be involved in premeiotic DNA replication. The protein is Autophagy-related protein 18 (ATG18) of Pyricularia oryzae (strain 70-15 / ATCC MYA-4617 / FGSC 8958) (Rice blast fungus).